A 142-amino-acid chain; its full sequence is Deoxyuridine 5'-triphosphate nucleotidohydrolase (142 aa).

Residues 62–64, Asn-75, and 79–81 contribute to the substrate site; these read RSG and TID.

It belongs to the dUTPase family. Mg(2+) is required as a cofactor.

The enzyme catalyses dUTP + H2O = dUMP + diphosphate + H(+). The protein operates within pyrimidine metabolism; dUMP biosynthesis; dUMP from dCTP (dUTP route): step 2/2. Functionally, this enzyme is involved in nucleotide metabolism: it produces dUMP, the immediate precursor of thymidine nucleotides and it decreases the intracellular concentration of dUTP so that uracil cannot be incorporated into DNA. The protein is Deoxyuridine 5'-triphosphate nucleotidohydrolase of Clostridium novyi (strain NT).